The sequence spans 1290 residues: DNA-directed RNA polymerase subunit beta' (1290 aa).

Zn(2+) is bound by residues cysteine 68, cysteine 70, cysteine 83, and cysteine 86. Aspartate 530, aspartate 532, and aspartate 534 together coordinate Mg(2+). 4 residues coordinate Zn(2+): cysteine 909, cysteine 985, cysteine 992, and cysteine 995.

This sequence belongs to the RNA polymerase beta' chain family. The RNAP catalytic core consists of 2 alpha, 1 beta, 1 beta' and 1 omega subunit. When a sigma factor is associated with the core the holoenzyme is formed, which can initiate transcription. It depends on Mg(2+) as a cofactor. Requires Zn(2+) as cofactor.

It catalyses the reaction RNA(n) + a ribonucleoside 5'-triphosphate = RNA(n+1) + diphosphate. Functionally, DNA-dependent RNA polymerase catalyzes the transcription of DNA into RNA using the four ribonucleoside triphosphates as substrates. The protein is DNA-directed RNA polymerase subunit beta' of Mycoplasma pneumoniae (strain ATCC 29342 / M129 / Subtype 1) (Mycoplasmoides pneumoniae).